The primary structure comprises 286 residues: Shikimate dehydrogenase (NADP(+)) (286 aa).

Residues 22 to 24 (SLS) and Thr69 each bind shikimate. Residue Lys73 is the Proton acceptor of the active site. Position 85 (Glu85) interacts with NADP(+). Asn94 and Asp109 together coordinate shikimate. NADP(+) contacts are provided by residues 133–137 (GAGGA) and Val231. Tyr233 contacts shikimate. Residue Gly254 coordinates NADP(+).

Belongs to the shikimate dehydrogenase family. Homodimer.

It catalyses the reaction shikimate + NADP(+) = 3-dehydroshikimate + NADPH + H(+). Its pathway is metabolic intermediate biosynthesis; chorismate biosynthesis; chorismate from D-erythrose 4-phosphate and phosphoenolpyruvate: step 4/7. In terms of biological role, involved in the biosynthesis of the chorismate, which leads to the biosynthesis of aromatic amino acids. Catalyzes the reversible NADPH linked reduction of 3-dehydroshikimate (DHSA) to yield shikimate (SA). This is Shikimate dehydrogenase (NADP(+)) from Alkaliphilus metalliredigens (strain QYMF).